A 313-amino-acid polypeptide reads, in one-letter code: Pyrimidine-specific ribonucleoside hydrolase RihB (313 aa).

D11 (proton acceptor) is an active-site residue. Ca(2+) is bound by residues D11, D16, and V124. Positions 227 and 239 each coordinate substrate. A Ca(2+)-binding site is contributed by D240.

This sequence belongs to the IUNH family. RihB subfamily. Homotetramer. The cofactor is Ca(2+).

It catalyses the reaction a pyrimidine ribonucleoside + H2O = a pyrimidine nucleobase + D-ribose. In terms of biological role, hydrolyzes cytidine or uridine to ribose and cytosine or uracil, respectively. Has a clear preference for cytidine over uridine. Strictly specific for ribonucleosides. The chain is Pyrimidine-specific ribonucleoside hydrolase RihB from Shigella sonnei (strain Ss046).